Here is a 393-residue protein sequence, read N- to C-terminus: S-adenosylmethionine synthase 1 (393 aa).

Glutamate 9 provides a ligand contact to Mg(2+). Residue histidine 15 coordinates ATP. Residue glutamate 43 coordinates K(+). L-methionine contacts are provided by glutamate 56 and glutamine 99. ATP is bound by residues 167–169 (DGK), 235–238 (SGRF), aspartate 246, 252–253 (RK), alanine 269, lysine 273, and lysine 277. Position 246 (aspartate 246) interacts with L-methionine. Lysine 277 serves as a coordination point for L-methionine.

Belongs to the AdoMet synthase family. In terms of assembly, homotetramer. Mn(2+) serves as cofactor. It depends on Mg(2+) as a cofactor. The cofactor is Co(2+). K(+) is required as a cofactor. Requires NH4(+) as cofactor. In terms of tissue distribution, mostly expressed in roots, and, to a lower extent, in hypocotyls and cotyledons.

It localises to the cytoplasm. The catalysed reaction is L-methionine + ATP + H2O = S-adenosyl-L-methionine + phosphate + diphosphate. The protein operates within amino-acid biosynthesis; S-adenosyl-L-methionine biosynthesis; S-adenosyl-L-methionine from L-methionine: step 1/1. With respect to regulation, inhibited by products of SAMS reaction (SAM, Pi, PPi), substrate analogs (cycloleucine and ethionine), and alternative nucleotides (GTP, CTP and ADP). Strongly repressed by PPPi. Functionally, catalyzes the formation of S-adenosylmethionine from methionine and ATP. The reaction comprises two steps that are both catalyzed by the same enzyme: formation of S-adenosylmethionine (AdoMet) and triphosphate, and subsequent hydrolysis of the triphosphate. The chain is S-adenosylmethionine synthase 1 (SAMS1) from Catharanthus roseus (Madagascar periwinkle).